The sequence spans 262 residues: uncharacterized protein (262 aa).

The next 7 helical transmembrane spans lie at Ile42–Asn62, Ile71–Phe91, Ile115–Ile135, Val145–Asn165, Leu185–His205, Pro206–Ile226, and Ala235–Ile255.

Its subcellular location is the membrane. This is an uncharacterized protein from Acanthamoeba polyphaga mimivirus (APMV).